A 2280-amino-acid polypeptide reads, in one-letter code: Acetyl-CoA carboxylase (2280 aa).

A Biotin carboxylation domain is found at 68–577 (VITSILIANN…TTGWLDRLIA (510 aa)). The ATP-grasp domain occupies 226-418 (ETNIVTVDDD…LPAAQLQVAM (193 aa)). 266–271 (GGGGKG) is a binding site for ATP. Residues Glu375, Glu389, and Asn391 each contribute to the Mn(2+) site. Arg393 is a catalytic residue. One can recognise a Biotinyl-binding domain in the interval 704–778 (LEQENDPTQL…DAGDILGILT (75 aa)). Lys745 is modified (N6-biotinyllysine). Phosphoserine is present on residues Ser1179 and Ser1181. The CoA carboxyltransferase N-terminal domain occupies 1524–1863 (PYPTKEWLQP…KRNNPVPISP (340 aa)). The interval 1524 to 2181 (PYPTKEWLQP…EHYALQKITQ (658 aa)) is carboxyltransferase. Arg1772, Lys2074, and Arg2076 together coordinate CoA. In terms of domain architecture, CoA carboxyltransferase C-terminal spans 1867–2181 (TWDRDVEFYP…EHYALQKITQ (315 aa)).

Interacts with sad1. The cofactor is biotin. It depends on Mn(2+) as a cofactor.

It localises to the cytoplasm. It carries out the reaction hydrogencarbonate + acetyl-CoA + ATP = malonyl-CoA + ADP + phosphate + H(+). The enzyme catalyses N(6)-biotinyl-L-lysyl-[protein] + hydrogencarbonate + ATP = N(6)-carboxybiotinyl-L-lysyl-[protein] + ADP + phosphate + H(+). It participates in lipid metabolism; malonyl-CoA biosynthesis; malonyl-CoA from acetyl-CoA: step 1/1. By phosphorylation. Its function is as follows. Carries out three functions: biotin carboxyl carrier protein, biotin carboxylase and carboxyltransferase. This is Acetyl-CoA carboxylase (cut6) from Schizosaccharomyces pombe (strain 972 / ATCC 24843) (Fission yeast).